The sequence spans 196 residues: Holliday junction branch migration complex subunit RuvA (196 aa).

Positions 1–63 (MINKIYGKIV…DDDVKLFGFL (63 aa)) are domain I. The tract at residues 64–142 (NISEREVFEN…KGDESSSYML (79 aa)) is domain II. Residue Lys143 is a region of interest, flexible linker. Residues 143-196 (KFKELEQSIVNMGFDRKLVVVAFREIMLSDKFLILKEAEQEQFLFTETLKRLSV) are domain III.

Belongs to the RuvA family. Homotetramer. Forms an RuvA(8)-RuvB(12)-Holliday junction (HJ) complex. HJ DNA is sandwiched between 2 RuvA tetramers; dsDNA enters through RuvA and exits via RuvB. An RuvB hexamer assembles on each DNA strand where it exits the tetramer. Each RuvB hexamer is contacted by two RuvA subunits (via domain III) on 2 adjacent RuvB subunits; this complex drives branch migration. In the full resolvosome a probable DNA-RuvA(4)-RuvB(12)-RuvC(2) complex forms which resolves the HJ.

Its subcellular location is the cytoplasm. Functionally, the RuvA-RuvB-RuvC complex processes Holliday junction (HJ) DNA during genetic recombination and DNA repair, while the RuvA-RuvB complex plays an important role in the rescue of blocked DNA replication forks via replication fork reversal (RFR). RuvA specifically binds to HJ cruciform DNA, conferring on it an open structure. The RuvB hexamer acts as an ATP-dependent pump, pulling dsDNA into and through the RuvAB complex. HJ branch migration allows RuvC to scan DNA until it finds its consensus sequence, where it cleaves and resolves the cruciform DNA. This is Holliday junction branch migration complex subunit RuvA from Borrelia recurrentis (strain A1).